The chain runs to 225 residues: Insulin-induced gene 2 protein (225 aa).

The Cytoplasmic portion of the chain corresponds to Met-1–Leu-28. The chain crosses the membrane as a helical span at residues Met-29 to Ile-51. The Lumenal portion of the chain corresponds to Gln-52 to Ala-70. A helical membrane pass occupies residues Trp-71–Tyr-88. At Pro-89 to Arg-103 the chain is on the cytoplasmic side. A helical transmembrane segment spans residues Glu-104 to Asp-126. Over Phe-127 to Asn-129 the chain is Lumenal. A helical membrane pass occupies residues Asn-130–Phe-148. Over Asp-149–Ser-153 the chain is Cytoplasmic. Residue Ser-151 is modified to Phosphoserine. Residues Gly-154 to Asn-175 form a helical membrane-spanning segment. The Lumenal segment spans residues Gly-176 to Arg-189. A helical transmembrane segment spans residues Ser-190–Gly-207. At Arg-208–Glu-225 the chain is on the cytoplasmic side. Residue Cys-215 is modified to Cysteine sulfenic acid (-SOH); alternate. Cys-215 participates in a covalent cross-link: Glycyl cysteine thioester (Cys-Gly) (interchain with G-Cter in ubiquitin); alternate. The KxHxx signature appears at Ala-219–Glu-225.

This sequence belongs to the INSIG family. In terms of assembly, interacts with SCAP; interaction is direct and only takes place in the presence of sterols; it prevents interaction between SCAP and the coat protein complex II (COPII). Associates with the SCAP-SREBP complex (composed of SCAP and SREBF1/SREBP1 or SREBF2/SREBP2); association is mediated via its interaction with SCAP and only takes place in the presence of sterols. Interacts with RNF139. Interacts with RNF145. Post-translationally, phosphorylation at Ser-151 by PCK1 reduces binding to oxysterol, disrupting the interaction between INSIG2 and SCAP, thereby promoting nuclear translocation of SREBP proteins (SREBF1/SREBP1 or SREBF2/SREBP2) and subsequent transcription of downstream lipogenesis-related genes. Polyubiquitinated by AMFR/gp78 at Cys-215 in some tissues such as adipose tissues, undifferentiated myoblasts and liver, leading to its degradation. In differentiated myotubes, Cys-215 oxidation prevents ubiquitination at the same site, resulting in protein stabilization. In terms of processing, oxidized at Cys-215 in differentiated myotubes, preventing ubiquitination at the same site, and resulting in protein stabilization.

It is found in the endoplasmic reticulum membrane. In terms of biological role, oxysterol-binding protein that mediates feedback control of cholesterol synthesis by controlling both endoplasmic reticulum to Golgi transport of SCAP and degradation of HMGCR. Acts as a negative regulator of cholesterol biosynthesis by mediating the retention of the SCAP-SREBP complex in the endoplasmic reticulum, thereby blocking the processing of sterol regulatory element-binding proteins (SREBPs) SREBF1/SREBP1 and SREBF2/SREBP2. Binds oxysterol, including 22-hydroxycholesterol, 24-hydroxycholesterol, 25-hydroxycholesterol and 27-hydroxycholesterol, regulating interaction with SCAP and retention of the SCAP-SREBP complex in the endoplasmic reticulum. In presence of oxysterol, interacts with SCAP, retaining the SCAP-SREBP complex in the endoplasmic reticulum, thereby preventing SCAP from escorting SREBF1/SREBP1 and SREBF2/SREBP2 to the Golgi. Sterol deprivation or phosphorylation by PCK1 reduce oxysterol-binding, disrupting the interaction between INSIG2 and SCAP, thereby promoting Golgi transport of the SCAP-SREBP complex, followed by processing and nuclear translocation of SREBF1/SREBP1 and SREBF2/SREBP2. Also regulates cholesterol synthesis by regulating degradation of HMGCR: initiates the sterol-mediated ubiquitin-mediated endoplasmic reticulum-associated degradation (ERAD) of HMGCR via recruitment of the reductase to the ubiquitin ligase RNF139. The protein is Insulin-induced gene 2 protein of Sus scrofa (Pig).